Here is a 501-residue protein sequence, read N- to C-terminus: Beta-secretase 1 (501 aa).

An N-terminal signal peptide occupies residues 1 to 21 (MAPALHWLLLWVGSGMLPAQG). Residues 22 to 45 (THLGIRLPLRSGLAGPPLGLRLPR) constitute a propeptide that is removed on maturation. The Extracellular segment spans residues 22 to 457 (THLGIRLPLR…PQTDESTLMT (436 aa)). Residues 39–58 (LGLRLPRETDEESEEPGRRG) form a disordered region. Residues 75–416 (YYVEMTVGSP…DRARKRIGFA (342 aa)) enclose the Peptidase A1 domain. Residue Asp93 is part of the active site. Lys126 carries the post-translational modification N6-acetyllysine. Asn153, Asn172, and Asn223 each carry an N-linked (GlcNAc...) asparagine glycan. Intrachain disulfides connect Cys216–Cys420, Cys278–Cys443, and Cys330–Cys380. N6-acetyllysine is present on residues Lys275, Lys279, and Lys285. Asp289 is a catalytic residue. An N6-acetyllysine mark is found at Lys299, Lys300, and Lys307. An N-linked (GlcNAc...) asparagine glycan is attached at Asn354. The chain crosses the membrane as a helical span at residues 458–478 (IAYVMAAICALFMLPLCLMVC). Residues Cys474, Cys478, Cys482, and Cys485 are each lipidated (S-palmitoyl cysteine). Topologically, residues 479-501 (QWRCLRCLRHQHDDFADDISLLK) are cytoplasmic. An interaction with RTN3 region spans residues 479–501 (QWRCLRCLRHQHDDFADDISLLK). Positions 496-500 (DISLL) match the DXXLL motif. Ser498 is subject to Phosphoserine. Lys501 is covalently cross-linked (Glycyl lysine isopeptide (Lys-Gly) (interchain with G-Cter in ubiquitin)).

Belongs to the peptidase A1 family. In terms of assembly, monomer. Interacts (via DXXLL motif) with GGA1, GGA2 and GGA3 (via their VHS domain); the interaction highly increases when BACE1 is phosphorylated at Ser-498. Interacts with RTN1; RTN2; RTN3 and RTN4; the interaction leads to inhibition of amyloid precursor protein processing. Interacts with SNX6. Interacts with PCSK9. Interacts with NAT8 and NAT8B. Interacts with BIN1. Interacts (via extracellular domain) with ADAM10 (via extracellular domain). Interacts with SORL1; this interaction may affect binding with APP and hence reduce APP cleavage. Interacts with NRDC AND NRG1. Post-translationally, N-Glycosylated. Addition of a bisecting N-acetylglucosamine by MGAT3 blocks lysosomal targeting, further degradation and is required for maintaining stability under stress conditions. Palmitoylation mediates lipid raft localization. In terms of processing, acetylated in the endoplasmic reticulum at Lys-126, Lys-275, Lys-279, Lys-285, Lys-299, Lys-300 and Lys-307. Acetylation by NAT8 and NAT8B is transient and deacetylation probably occurs in the Golgi. Acetylation regulates the maturation, the transport to the plasma membrane, the stability and the expression of the protein. Post-translationally, ubiquitinated at Lys-501, ubiquitination leads to lysosomal degradation. Monoubiquitinated and 'Lys-63'-linked polyubitinated. Deubiquitnated by USP8; inhibits lysosomal degradation. Phosphorylation at Ser-498 is required for interaction with GGA1 and retrograded transport from endosomal compartments to the trans-Golgi network. Non-phosphorylated BACE1 enters a direct recycling route to the cell surface. As to expression, expressed in the brain, specifically in neurons and astrocytes (at protein level).

The protein resides in the cell membrane. It is found in the golgi apparatus. The protein localises to the trans-Golgi network. Its subcellular location is the endoplasmic reticulum. It localises to the endosome. The protein resides in the late endosome. It is found in the early endosome. The protein localises to the cell surface. Its subcellular location is the cytoplasmic vesicle membrane. It localises to the membrane raft. The protein resides in the lysosome. It is found in the recycling endosome. The protein localises to the cell projection. Its subcellular location is the axon. It localises to the dendrite. The enzyme catalyses Broad endopeptidase specificity. Cleaves Glu-Val-Asn-Leu-|-Asp-Ala-Glu-Phe in the Swedish variant of Alzheimer's amyloid precursor protein.. Its activity is regulated as follows. Inhibited by RTN3 and RTN4. Functionally, responsible for the proteolytic processing of the amyloid precursor protein (APP). Cleaves at the N-terminus of the A-beta peptide sequence, between residues 671 and 672 of APP, leads to the generation and extracellular release of beta-cleaved soluble APP, and a corresponding cell-associated C-terminal fragment which is later released by gamma-secretase. Cleaves CHL1. The polypeptide is Beta-secretase 1 (Mus musculus (Mouse)).